The following is a 149-amino-acid chain: Aquaporin-like protein 2 (149 aa).

Positions Met1 to Ser35 are disordered. The Cytoplasmic portion of the chain corresponds to Met1 to His47. A helical membrane pass occupies residues Phe48 to Ile68. Residues Cys69–Gln89 lie on the Extracellular side of the membrane. A helical membrane pass occupies residues Leu90–Trp110. At Gly111–Arg149 the chain is on the cytoplasmic side.

It belongs to the MIP/aquaporin (TC 1.A.8) family.

The protein resides in the endoplasmic reticulum membrane. The protein localises to the cell membrane. Water channel required to facilitate the transport of water across membranes. Involved in freeze tolerance, osmotolerance and cell flocculation in liquid cultures. Is non-functional in most laboratory strains. The protein is Aquaporin-like protein 2 (AQY2-2) of Saccharomyces cerevisiae (strain JAY291) (Baker's yeast).